Reading from the N-terminus, the 276-residue chain is Cerberus (276 aa).

The signal sequence occupies residues Met1–Gly20. Residues Asn103, Asn118, and Asn160 are each glycosylated (N-linked (GlcNAc...) asparagine). 4 cysteine pairs are disulfide-bonded: Cys175–Cys221, Cys189–Cys235, Cys199–Cys251, and Cys203–Cys253. Positions Cys175–Asn259 constitute a CTCK domain. An N-linked (GlcNAc...) asparagine glycan is attached at Asn234.

It belongs to the DAN family. In terms of assembly, the long chain interacts with nodal/nr-1, bmp4 and wnt8, thereby inhibiting their function. The short chain interacts with nodal/nr-1 but not bmp4 or wnt8. As to expression, expressed in the anterior endomesoderm of the early gastrula with expression expanded laterally around the margin at the endoderm/mesoderm boundary.

The protein resides in the secreted. Its function is as follows. Inhibits wnt, nodal/nr-1 and bmp signaling in the embryo to promote head formation and anterior neural induction. Within the endoderm, acts as an essential mediator of nodal/nr-1-induced cardiogenesis in the overlying mesoderm. The sequence is that of Cerberus from Xenopus tropicalis (Western clawed frog).